Consider the following 588-residue polypeptide: A-type ATP synthase subunit A (588 aa).

Residue 237–244 (GPFGSGKT) participates in ATP binding.

This sequence belongs to the ATPase alpha/beta chains family. In terms of assembly, has multiple subunits with at least A(3), B(3), C, D, E, F, H, I and proteolipid K(x).

The protein resides in the cell membrane. It catalyses the reaction ATP + H2O + 4 H(+)(in) = ADP + phosphate + 5 H(+)(out). Component of the A-type ATP synthase that produces ATP from ADP in the presence of a proton gradient across the membrane. The A chain is the catalytic subunit. The chain is A-type ATP synthase subunit A from Methanoregula boonei (strain DSM 21154 / JCM 14090 / 6A8).